Consider the following 126-residue polypeptide: Small ribosomal subunit protein eS6 (126 aa).

This sequence belongs to the eukaryotic ribosomal protein eS6 family.

In Nanoarchaeum equitans (strain Kin4-M), this protein is Small ribosomal subunit protein eS6.